The sequence spans 61 residues: Small ribosomal subunit protein uS14 (61 aa).

C24, C27, C40, and C43 together coordinate Zn(2+).

The protein belongs to the universal ribosomal protein uS14 family. Zinc-binding uS14 subfamily. In terms of assembly, part of the 30S ribosomal subunit. Contacts proteins S3 and S10. Zn(2+) serves as cofactor.

Functionally, binds 16S rRNA, required for the assembly of 30S particles and may also be responsible for determining the conformation of the 16S rRNA at the A site. The sequence is that of Small ribosomal subunit protein uS14 from Bifidobacterium longum (strain DJO10A).